The primary structure comprises 5560 residues: MFRCRNMVRDNSRNICFGKLAETTTTQQQQQQQQFVVDSSTIINNNNNNNNNNNNQKLKRSTEEPPTNSFERNYYDRTTSRLVTQYQANNSTSLANSNSSPSSVSASASVFATAAGGSSERSRNRDRPYRNGSASVQGGGINSSNTTTTTAACTAGGSGSGAIGTGTGGLVGSGPGGVPQALGDRSSTQNIHQNHQSARVAPPQSWYEAATAATTAQLKSSGGSGNAGASAAVGFTMSSSPINHHPHQHPHLQNPQHPHYTSSPVVGAGSCPSAAQGQPQIQSQSQTTAVHRSVAYAGSAADDLLNTATSRNMLLHSSKLNKLLKGAGATGSGGERSGSESPGRAGGATPLTTTSTITNNSFSSNSLNNTITTATPTMPTIASGAAGSVGLGSGAEAGVCSNSGTASGDILNVAAVLAAAVDNGVPTHPIRTRHNLHGRSTTSSSRSHSRSPSSYSSSHSSSSSSHSSSHSHASSPVQSSGNCAMAEGRSSRTVNSVTVTSNSSNPSGTAVTVSSAGVGGGCGSSSSSSSSSSSSGSSCLTANPVVHSEDNRPLAIRVRNLPARSSDTSLKDGLFHEYKKHGKVTWVKVVGQNSERYALVCFKKPDDVEKALEVSHDKHFFGCKIEVEPYQGYDVEDNEFRPYEAELDEYHPKSTRTLFIGNLEKDITAGELRSHFEAFGEIIEIDIKKQGLNAYAFCQYSDIVSVVKAMRKMDGEHLGSNRIKLGFGKSMPTNCVWIDGVDEKVSESFLQSQFTRFGAVTKVSIDRNRQLALVLYDQVQNAQAAVKDMRGTILRRKKLQVDFASRECQDAFYDKQEKQQQQSSGSNPRFSRYESSASSLQSRSRASSFSRHQNNSNDDCSPINTPGGASSGISSASNLINQSTSINISNIGTNACSAMPAPSLASAVVSCNVNASGTVPASTSMPSGVSSSSSSLPMSPAALAQRHRMVRNARQTVDCDFNEVGRLRFRSSEEVSGGAGNSTQFEDVRCDSPVTARQGSAVNCFTGPTAAVGESIDGTLNNNQITGGAEGFTGSGGSILSRRRCGKTPKDLHPVHNQRIQLAEQVEECPSSGDEGVVSPRKRIKMDYHHHHHHSNASGVESTGEHSSINKPSPLLLSNCDVIHDPLNRKSEIRRVSETPSGSPSIKFPGHLPSAPQSLMLSCRRPSIDVGALSALSSSSAFRHGIVGASSMDQQHMMNASAAAKRRRVTTTMQQPSSSSTTNSSSGSGLGGISSLTPADEYHHHVSRGRGHQLHSHHSHEASGGESADGSRPGTPLCDERPEVLPTEPRRLPPPRERVRERTRDVMWLPLPKFGVLFFQQQQSRSSGGGGAGNSYLQQQLGGGSTGGLGCIGAASSSACSLNNSSLNASQGMGSCSGSTFLPSPSSRYWRSSSHHQNQQNNHQQQSQQLHGSSSSNTCLMASPARPRSLSSNSSDSDVPGQNAGGSPSLDERLRNFEENYERWSGGSSREHISGHTPSSATPSWQLSMHMNLSTGLNSHQTSSASGNSNSSSGTVSSSASNSRHKFLDIDELQPSDIVKSVLAKKSVFDDDFQRLNKNQWYDPSSSDFALGSSSNIVTGSSLVANVSRHPGGPCSGNTSPALPNLAATKATPIIGNCSGGLGNSTGSKSAGLLQRLSSLSPMNSPQASMSPYNSPSPSPSVGGVTACLGQLTKPAAPGTASAGLSGGTAASSSSPAANSGPTKGLQYPFPSHPPLPNTAAPPPAVQPAPPPLPEMGKQSRLTGQSSGNNLTKSLSVPDGPQSSPARVQLQKSASVPGSTNVGAPSSLSLDSTTASVETSASISSSTSNGNSSLTSAAIHVQKPQQSTFVEEEHTKKSGTSTSQSSSSSSKKISSTHDKLHSKHNNRSESDKKIKKSDKNASSSDKRKNSSTSQSSKSATPRIEDDSSEADDTADKAEKNQRHEKEKKERQEKREKDLRKQVEREEKDRKAQQEEREKEDRKAKEEEKEREREKKAQEDREKKEREERELREKEQRDKEQKEKEIREKDLREKEQRERDNREKELRDKDLREKEMREKEQREKELHREKDQREREHREKEQSRRAMDVEQEGRGGRMRELSSYQKSKMDIAGEASSLTAIDCQHNKENAMDTIAQGTPGASPSTPSDNTPKERSRKLSRNSPVRLHKRRLSSQESNHSAGGGGSCGGSSHQIHHEDYVKRIRMENSQNISVHSSNQRLNDRRDSKEHKSSSFKEDKNSSSHISRPHGCGGSSASSSKHHHRRDKHHQKGSASSIETNSSIEVVVDPISQTKHNLNTSEEELQSHQPKREKEREHFSSHANSSSSRHKSKRDHHHHREKKRHSVAESTNTDEEHTPQQHNPHRRISAAGSGSAGELSSAATNTSSGKLHHQHHRRSVERKSSRGSDEGHHSSSKSLRAKLMMLSSADSDDTDDASKKHSIFDIPDDCPNVSMYDKVKARSCKNMQRQAEEKKIKAKFSQLKQSRAKKKRSTSYDGDSDTEFEDRQHRNSGSSSFHGRYPGLSSSDDDDDEETHQRRISSDSDAEHGGQDNQGASTLADANRVRQMQQNLRRLCDGDDSSEDEIRRNVMKHSHFGKRNSNSTRIASDSESQSQPAPDLTIKQEHPIAPAQEIKREQLSDEEQKFKSRHDSNSSIEERKLKTEREIKTELGDFYNSSEYTYTGKLKEYSPETRKKHKKSKRRLKSSSTADTSAAQTPLVMTPLTPSIFDVHSSSECKTKFDNFDDLKTECSSIPLEISAGERRKHKERKEKKREKLRNMTEATVPNSPTTNDTSSEKLSKEERHRLKKSKKSKSMDNSCNTKIYNSSGAHPSTSPSLPATPTSAPSTAQTSKRGEDKMEFIFGIISDEEESQFPEQAETNKDIIPSSVSTTGPIVSAALQTYKQEPSTPNSKNEEAHIQLTVHEPEQQQQLERSRLSGGSSSSSHADRERHRREKREKKRREKSQREQQNQIHQKSSKVETKVDDDNSVDMDEAGRALEAQLMSDFDTKPISEEATPSTAATYRSDMTDVFRFSDNEDNNSVDMTKQGVKSEQQEQHKSKDKKKKKKRSKEEKQEKLLQQQRRESLPNVASTSSAPPTPGKLTVNVQAASKHADLQLDAKHISSPPVCKPSPSLPCLIGDDDDDALHTPKAKPTTPSSRGNDGLTPSREKPRLISPIPKTPTIANSSTLSTQSAETPVSSGTVISSSALATTPTSSTAAGVSAAPGLDNSPTSASAQCKKKESFIPGFDGQLDDRISESAVQSISAEFNSTSLLDNIADEPKIPVASPPRATKPLDKLEESKSRVTISQEETESAVSALLGESFGTSSTTDYSLDGMDEMSSVNELETPTLVIAEPDEEAALAAKAIETAGEPASILEEPEMEPEREAEPDPDPEAEIESEPVVEVLDPEELNKAVQSLKHEDMMDIKADTPQSERDLQIDTDTEENPDEADSSGPSLKIDETVQSSSSPEKSISNNSPTPRETANIDIPNVESQPKLSNESTPQPSVITKLPFLDTPKTVPAGLPPSPVKIEPPTISKLQQPLVQPVQTVLPAPHSTGSGISANSVINLDLSNVISSCSNTSAASATASASASISFGSPTASQNAMPQASTPKQGPITPQQAIRTQSLIMQPPTISIPEQTPHFAVPQMVLSPQSHHPQQPGTYMVGIRAPSPHSPLHSPGRGVAQSRLVGQLSPVGRPMVSQPSPQQQVQQTQQQHALITSPQSSNISPLASPTTRVLSSSNSPTTSKVNSYQPRNQQVPQQPSPKSVAEVQTTPQLMTIPLQKMTPIQVPHHPTIISKVVTVQPQQATQSQVASSPPLGSLPPHKNVHLNAHQNQQQPQVIAKMTAHQHQQHMQQFMHQQMIQRQQHMQQQQLHGQSQQITSAPQHQMHQQHQAQQQQQHHNQQHLNQQLHAQQHPTQKQHQAQQQFNQQIQQHQSQQQHQVQQQNQAQQQHLSQQQHQSQQQLNQQHQAQQQQLQQIQKLQQMHGPQQQQKSPQGVGHLGGSTSIFASQQHNSQLPARGVPQQQHPQQLSHSSPCKPNTLVSVNQGVQPPAILTRVGSHSQPNQQQQLPHQQSSSGHPHQKQLSSPGANLPLQTPLNVIQNTPKIIVQQHIVAQNQVPPPQTQGNAIHYPQNQGKDSTPPGHVEPTPAMSAQKTSESVSVIRTPTPTTGLAVISANTVGSLLTEENLIKISQPKQDELIEQDSKEVDSDYWSAKEVNIDSVIKKLDTPLASKDAKRAVEMQAIAPAPIPNPQPGNQSMAQETALPTTSMSVNNSNDHDTEDETETRQLPPAKPPIPTVGRPPGRGGSAKRGRQPRGAKKVGGFPLNSVTAAPPGVDSLVVQPGDNGVQTRLRKPVTAPVTRGRKGRPPRNLLLQQQQLQQQQLDIQRKGMEMVTSATSSTPLPTPIPTSSVLTAAEKKARNQALTQAQEQNQVASQVGTGQDIYEFHEDGGEEPKPKTISSVAPSAEDQRPRLILTINKTQPSIKNISEMEQTIQQQQQQQSEVISNTDPIGGDNSESCNTRKSRRLQEKEDRSTVDDIIEDVVRNTNTPTGTGPHLPKGAQTPPRRSGRNAQAKKTDAVQIINAVGRPRRSKDRKTIGEQTANLIEEVTASNATVAASHLAPPEGAGVESHVPQLDAKEVEPVSVVTPISTPAPVSVAAPVTVPVPAMVPVKPTMPQHPKKKAIAAAEIESYQAINSSIPSGGLPMHQTAAPATQKITGGVADAVSKALVDPVTGVITAGMPQGKEGNLPAATAAAPANSSNEDGQAAPPPQLQHQQQQQHPQQPPQQQANLQINTTLIPSGLPNPITALGKSVQLETSAAALLNKPVSVLVKGNASQVIQQQQPQIVAPAKQPIILQQNPLPTVLHHAQHTTVRPPQPLKAHVLNREKNIQQQLTPTKQAVAQPPQHAPHSGHMLLTDTAGNQQLVQPQIIARHLQQQQHLQVNVPPPTAHSPHSPRIPSQQQQLGPGASISPQQQQPQTVVIKQAASAAQPQILHVVSSKASVVPQPQQQQLPPTSSTGPHLQLAKPNYSYAPTVLTPTLPAVQQQQQQHLYKQNNQQKGAQIQMPPHGIIMPTHPGMLLQQKLPAHLQPQQHQLNPSPPPGKPNPVLHGLQSGQIMPGSVGSPPPVSAAVLKTAQQQVNSVVPVAGIRTAIPNISPQSQPRVSPLVLPPGISGVPPFDASLHDLGAYVSGRRTQSPPPAHQQASPITPNDSTYRGVTASRDFMLYQHHLMRGGDYDDKMGSSPPLELRRPGSGPPRTIAVPHSLQSPQDRTAADSPQMAQVYVHNTRIPPAHFSEIASRGLYDSGALQLEPPPAHRPTATISVVVPQQMPAVSSGSPFIGRDGSVQPGSHHHPGKAMDMQLDEMDRMSMIAAVVQQQQEHLPPALPAGMELASQQAPPAMAPPPGDSLVTLLQRYPVMWQGLLALKTDQAAVQMHFVHGNPNVARASLPSLVETNTPLLRIAQRMRLEQTQLEGVAKKMQVDKEHCMLLALPCGRDHADVLQHSRNLQTGFITYLQQKMAAGIVNIPIPGSEQAAYVVHIFPSCDFANENLERAAPDLKNRVAELAHLLIVIATV.

Disordered regions lie at residues 42–72 (IINN…SFER), 114–145 (AAGG…NSSN), 166–204 (GTGG…APPQ), 236–287 (TMSS…QSQT), 326–366 (GAGA…SSNS), and 425–545 (VPTH…ANPV). A compositionally biased stretch (low complexity) spans 44–55 (NNNNNNNNNNNN). Positions 120–129 (ERSRNRDRPY) are enriched in basic and acidic residues. Gly residues predominate over residues 166 to 177 (GTGGLVGSGPGG). Residues 185 to 197 (RSSTQNIHQNHQS) show a composition bias toward polar residues. 5 stretches are compositionally biased toward low complexity: residues 272–287 (PSAA…QSQT), 339–366 (SESP…SSNS), 440–480 (STTS…VQSS), 491–516 (SRTV…VSSA), and 524–539 (SSSS…GSSC). 3 RRM domains span residues 554–632 (LAIR…PYQG), 656–730 (RTLF…FGKS), and 734–806 (NCVW…FASR). Disordered stretches follow at residues 814-876 (DKQE…ISSA), 1027-1054 (GGAE…DLHP), 1089-1114 (HHHH…KPSP), and 1131-1150 (SEIR…KFPG). Residues 833-851 (YESSASSLQSRSRASSFSR) are compositionally biased toward low complexity. Residues 852–864 (HQNNSNDDCSPIN) are compositionally biased toward polar residues. Residues 867–876 (GGASSGISSA) are compositionally biased toward low complexity. A compositionally biased stretch (gly residues) spans 1028-1037 (GAEGFTGSGG). Residues 1096–1111 (NASGVESTGEHSSINK) show a composition bias toward polar residues. The residue at position 1174 (Ser-1174) is a Phosphoserine. Disordered stretches follow at residues 1196–1298 (HMMN…PRER) and 1386–1521 (SSRY…SSAS). The span at 1217–1237 (SSSSTTNSSSGSGLGGISSLT) shows a compositional bias: low complexity. Residues 1245–1258 (HVSRGRGHQLHSHH) show a composition bias toward basic residues. Residues 1278 to 1298 (CDERPEVLPTEPRRLPPPRER) show a composition bias toward basic and acidic residues. Residues 1386–1438 (SSRYWRSSSHHQNQQNNHQQQSQQLHGSSSSNTCLMASPARPRSLSSNSSDSD) are compositionally biased toward low complexity. Residues 1449-1465 (SLDERLRNFEENYERWS) adopt a coiled-coil conformation. The segment covering 1450–1462 (LDERLRNFEENYE) has biased composition (basic and acidic residues). The segment covering 1476 to 1501 (HTPSSATPSWQLSMHMNLSTGLNSHQ) has biased composition (polar residues). Over residues 1502-1521 (TSSASGNSNSSSGTVSSSAS) the composition is skewed to low complexity. Phosphoserine is present on residues Ser-1596 and Ser-1600. 2 disordered regions span residues 1640-2428 (LSPM…DCPN) and 2450-2537 (KKIK…TLAD). A compositionally biased stretch (low complexity) spans 1675–1703 (PAAPGTASAGLSGGTAASSSSPAANSGPT). Positions 1711–1734 (PSHPPLPNTAAPPPAVQPAPPPLP) are enriched in pro residues. Residues 1740-1791 (SRLTGQSSGNNLTKSLSVPDGPQSSPARVQLQKSASVPGSTNVGAPSSLSLD) are compositionally biased toward polar residues. Composition is skewed to low complexity over residues 1792–1818 (STTA…TSAA) and 1838–1853 (SGTS…SKKI). Residues 1902 to 2071 (RIEDDSSEAD…SRRAMDVEQE (170 aa)) adopt a coiled-coil conformation. Phosphoserine occurs at positions 1907 and 1908. The segment covering 1913 to 2079 (TADKAEKNQR…QEGRGGRMRE (167 aa)) has biased composition (basic and acidic residues). Polar residues predominate over residues 2114–2128 (AQGTPGASPSTPSDN). Residues 2133–2150 (RSRKLSRNSPVRLHKRRL) are compositionally biased toward basic residues. The segment covering 2172-2183 (IHHEDYVKRIRM) has biased composition (basic and acidic residues). The segment covering 2184–2197 (ENSQNISVHSSNQR) has biased composition (polar residues). Over residues 2198 to 2218 (LNDRRDSKEHKSSSFKEDKNS) the composition is skewed to basic and acidic residues. Residues 2236-2248 (SKHHHRRDKHHQK) are compositionally biased toward basic residues. Polar residues-rich tracts occupy residues 2249-2260 (GSASSIETNSSI) and 2267-2276 (ISQTKHNLNT). At Thr-2276 the chain carries Phosphothreonine. Position 2277 is a phosphoserine (Ser-2277). The span at 2286–2296 (PKREKEREHFS) shows a compositional bias: basic and acidic residues. Basic residues predominate over residues 2304–2321 (SRHKSKRDHHHHREKKRH). Thr-2329 is subject to Phosphothreonine. 3 positions are modified to phosphoserine: Ser-2345, Ser-2349, and Ser-2351. Over residues 2345 to 2359 (SAAGSGSAGELSSAA) the composition is skewed to low complexity. A compositionally biased stretch (basic residues) spans 2366-2376 (KLHHQHHRRSV). Positions 2377 to 2389 (ERKSSRGSDEGHH) are enriched in basic and acidic residues. A phosphoserine mark is found at Ser-2403, Ser-2404, and Ser-2407. Thr-2410 is modified (phosphothreonine). Ser-2476 carries the post-translational modification Phosphoserine. Thr-2478 carries the post-translational modification Phosphothreonine. Residues Ser-2501, Ser-2502, Ser-2503, Ser-2517, Ser-2518, Ser-2520, Ser-2557, and Ser-2558 each carry the phosphoserine modification. A compositionally biased stretch (basic and acidic residues) spans 2511–2526 (THQRRISSDSDAEHGG). Residues 2565-2574 (NVMKHSHFGK) show a composition bias toward basic residues. Disordered stretches follow at residues 2565-2637 (NVMK…ERKL), 2665-2695 (YSPE…QTPL), 2736-2832 (AGER…KRGE), 2844-3215 (DEEE…SAQC), 3257-3313 (EPKI…SLDG), 3341-3487 (AKAI…SVIT), and 3572-3597 (ISFG…PITP). The segment covering 2575–2592 (RNSNSTRIASDSESQSQP) has biased composition (polar residues). Phosphoserine is present on residues Ser-2584, Ser-2586, and Ser-2588. Over residues 2609–2637 (EIKREQLSDEEQKFKSRHDSNSSIEERKL) the composition is skewed to basic and acidic residues. Over residues 2670-2681 (RKKHKKSKRRLK) the composition is skewed to basic residues. Residues 2682-2693 (SSSTADTSAAQT) are compositionally biased toward low complexity. Residues 2732–2760 (LEISAGERRKHKERKEKKREKLRNMTEAT) adopt a coiled-coil conformation. Residues 2739 to 2752 (RRKHKERKEKKREK) are compositionally biased toward basic residues. The span at 2757-2770 (TEATVPNSPTTNDT) shows a compositional bias: polar residues. Over residues 2771–2781 (SSEKLSKEERH) the composition is skewed to basic and acidic residues. Positions 2792–2807 (MDNSCNTKIYNSSGAH) are enriched in polar residues. The segment covering 2808 to 2828 (PSTSPSLPATPTSAPSTAQTS) has biased composition (low complexity). Polar residues predominate over residues 2863–2888 (SSVSTTGPIVSAALQTYKQEPSTPNS). A coiled-coil region spans residues 2925–2957 (RERHRREKREKKRREKSQREQQNQIHQKSSKVE). Residues 2927–2940 (RHRREKREKKRREK) show a composition bias toward basic residues. Residues 3003-3012 (DMTDVFRFSD) are compositionally biased toward basic and acidic residues. A phosphoserine mark is found at Ser-3011 and Ser-3018. Residues 3026–3063 (VKSEQQEQHKSKDKKKKKKRSKEEKQEKLLQQQRRESL) are a coiled coil. The span at 3036 to 3045 (SKDKKKKKKR) shows a compositional bias: basic residues. Basic and acidic residues-rich tracts occupy residues 3046–3062 (SKEE…RRES) and 3088–3098 (KHADLQLDAKH). Thr-3125 is modified (phosphothreonine). Positions 3159-3181 (TIANSSTLSTQSAETPVSSGTVI) are enriched in polar residues. The span at 3182–3201 (SSSALATTPTSSTAAGVSAA) shows a compositional bias: low complexity. Residues 3270 to 3280 (KPLDKLEESKS) are compositionally biased toward basic and acidic residues. Over residues 3367–3387 (PDPDPEAEIESEPVVEVLDPE) the composition is skewed to acidic residues. A compositionally biased stretch (basic and acidic residues) spans 3396 to 3416 (LKHEDMMDIKADTPQSERDLQ). The residue at position 3408 (Thr-3408) is a Phosphothreonine. The residue at position 3411 (Ser-3411) is a Phosphoserine. The span at 3417–3429 (IDTDTEENPDEAD) shows a compositional bias: acidic residues. The segment covering 3443 to 3456 (SSSSPEKSISNNSP) has biased composition (low complexity). 2 stretches are compositionally biased toward polar residues: residues 3469–3485 (VESQ…QPSV) and 3574–3597 (FGSP…PITP). Phosphoserine is present on residues Ser-3650, Ser-3653, Ser-3657, and Ser-3672. 13 disordered regions span residues 3673-3750 (PVGR…VAEV), 3787-3807 (ATQS…HKNV), 3821-4024 (IAKM…LVSV), 4036-4075 (RVGS…PLQT), 4098-4138 (VPPP…TSES), 4248-4306 (TSMS…GFPL), 4426-4453 (EFHE…QRPR), 4471-4558 (MEQT…AKKT), 4723-4771 (MPQG…PQQQ), 4920-4963 (QQQH…QPQT), 4984-5009 (KASV…LQLA), 5176-5197 (RRTQ…NDST), and 5220-5241 (YDDK…GPPR). Residues 3679–3694 (VSQPSPQQQVQQTQQQ) show a composition bias toward low complexity. Over residues 3695–3735 (HALITSPQSSNISPLASPTTRVLSSSNSPTTSKVNSYQPRN) the composition is skewed to polar residues. Residue Ser-3707 is modified to Phosphoserine. A compositionally biased stretch (low complexity) spans 3736–3747 (QQVPQQPSPKSV). Positions 3827–3963 (HQHQQHMQQF…QLQQIQKLQQ (137 aa)) are enriched in low complexity. Residues 3905 to 3965 (QQFNQQIQQH…QQIQKLQQMH (61 aa)) are a coiled coil. Composition is skewed to polar residues over residues 3965 to 3974 (HGPQQQQKSP) and 3982 to 3996 (GSTS…NSQL). 2 stretches are compositionally biased toward low complexity: residues 4002-4015 (PQQQ…HSSP) and 4039-4058 (SHSQ…SSGH). Composition is skewed to polar residues over residues 4064–4075 (LSSPGANLPLQT) and 4098–4117 (VPPP…QGKD). Residues 4288–4299 (SAKRGRQPRGAK) are compositionally biased toward basic residues. Residues 4426 to 4437 (EFHEDGGEEPKP) show a composition bias toward basic and acidic residues. The stretch at 4465–4486 (IKNISEMEQTIQQQQQQQSEVI) forms a coiled coil. The span at 4483-4502 (SEVISNTDPIGGDNSESCNT) shows a compositional bias: polar residues. Residues 4507–4517 (RLQEKEDRSTV) show a composition bias toward basic and acidic residues. Low complexity predominate over residues 4755-4771 (LQHQQQQQHPQQPPQQQ). Residue Ser-4938 is modified to Phosphoserine. Over residues 4984–5001 (KASVVPQPQQQQLPPTSS) the composition is skewed to low complexity. One can recognise an SPOC domain in the interval 5393 to 5560 (LVTLLQRYPV…AHLLIVIATV (168 aa)).

Belongs to the RRM Spen family. In terms of tissue distribution, ubiquitous. Expressed prior to cellularization in stage 3 embryos, and in blastoderm cells, including pole cells. Expressed throughout the rest of embryogenesis. Later, it is expressed at higher level in epidermal cells and CNS.

It is found in the nucleus. Functionally, probable corepressor protein, which regulates different key pathways such as the EGF receptor and Wg pathways. Involved in neuronal cell fate, survival and axon guidance, cell cycle regulation and repression of head identity in the embryonic trunk. May act with the Hox gene Deformed and the EGF receptor signaling pathway. Positive regulator of the Wg pathway in larval tissues but not in embryonic tissues. May act as a transcriptional corepressor protein, which repress transcription via the recruitment of large complexes containing histone deacetylase proteins. In Drosophila melanogaster (Fruit fly), this protein is Protein split ends (spen).